The following is a 229-amino-acid chain: Small ribosomal subunit protein uS3c (229 aa).

A KH type-2 domain is found at Leu-39–Gln-128.

The protein belongs to the universal ribosomal protein uS3 family. In terms of assembly, part of the 30S ribosomal subunit.

It is found in the plastid. Its subcellular location is the chloroplast. This is Small ribosomal subunit protein uS3c (rps3) from Tupiella akineta (Green alga).